The chain runs to 190 residues: Large ribosomal subunit protein eL15 (190 aa).

This sequence belongs to the eukaryotic ribosomal protein eL15 family.

This chain is Large ribosomal subunit protein eL15 (rpl15e), found in Nanoarchaeum equitans (strain Kin4-M).